A 90-amino-acid chain; its full sequence is MAVKIRLTRMGSKKKPFYRINVADSRSPRDGRFIETVGTYNPLVAENQVTLKEDRVLAWLANGAQPSDTVRNILSKEGVLKKFHDSKFSK.

The protein belongs to the bacterial ribosomal protein bS16 family.

In Streptococcus pneumoniae (strain Hungary19A-6), this protein is Small ribosomal subunit protein bS16.